A 183-amino-acid chain; its full sequence is ATP-dependent protease subunit HslV (183 aa).

The active site involves Thr2. Residues Gly157, Cys160, and Thr163 each contribute to the Na(+) site.

This sequence belongs to the peptidase T1B family. HslV subfamily. As to quaternary structure, a double ring-shaped homohexamer of HslV is capped on each side by a ring-shaped HslU homohexamer. The assembly of the HslU/HslV complex is dependent on binding of ATP.

It is found in the cytoplasm. It carries out the reaction ATP-dependent cleavage of peptide bonds with broad specificity.. With respect to regulation, allosterically activated by HslU binding. Functionally, protease subunit of a proteasome-like degradation complex believed to be a general protein degrading machinery. The protein is ATP-dependent protease subunit HslV of Vibrio parahaemolyticus serotype O3:K6 (strain RIMD 2210633).